Reading from the N-terminus, the 382-residue chain is Small ribosomal subunit protein bS1 homolog (382 aa).

S1 motif domains are found at residues G18 to R85, G103 to K168, G189 to K257, and G274 to K343. S244 is subject to Phosphoserine.

It belongs to the bacterial ribosomal protein bS1 family.

The sequence is that of Small ribosomal subunit protein bS1 homolog from Bacillus cereus (strain ATCC 10987 / NRS 248).